Reading from the N-terminus, the 345-residue chain is Galacturonate transporter (345 aa).

Residues M1–A32 form the signal peptide. 8 helical membrane passes run Y49–L69, V76–N96, G100–L120, F139–M159, M165–Y185, F237–A257, I265–Y285, and L304–S324.

This sequence belongs to the major facilitator superfamily. Phthalate permease family.

It localises to the cell inner membrane. The enzyme catalyses aldehydo-D-galacturonate(out) + H(+)(out) = aldehydo-D-galacturonate(in) + H(+)(in). Its activity is regulated as follows. Inhibited by cyanide and 2,4-dinitrophenol, but not by arsenate. In terms of biological role, transport of D-galacturonate. Cannot transport the dimer digalacturonic acid. Uptake is an active process. This is Galacturonate transporter from Dickeya chrysanthemi (Pectobacterium chrysanthemi).